The primary structure comprises 367 residues: MSEHQSLPAPEASTEVRVAIVGVGNCASSLVQGVEYYYNADDTSTVPGLMHVRFGPYHVRDVKFVAAFDVDAKKVGFDLSDAIFASENNTIKIADVAPTNVIVQRGPTLDGIGKYYADTIELSDAEPVDVVQALKEAKVDVLVSYLPVGSEEADKFYAQCAIDAGVAFVNALPVFIASDPVWAKKFTDAGVPIVGDDIKSQVGATITHRVLAKLFEDRGVQLDRTMQLNVGGNMDFLNMLERERLESKKISKTQAVTSNLKREFKTKDVHIGPSDHVGWLDDRKWAYVRLEGRAFGDVPLNLEYKLEVWDSPNSAGVIIDAVRAAKIAKDRGIGGPVIPASAYLMKSPPEQLPDDIARAQLEEFIIG.

Positions 78, 137, 157, 200, 235, and 248 each coordinate NAD(+).

The protein belongs to the myo-inositol 1-phosphate synthase family. Requires NAD(+) as cofactor.

The enzyme catalyses D-glucose 6-phosphate = 1D-myo-inositol 3-phosphate. Key enzyme in myo-inositol biosynthesis pathway that catalyzes the conversion of glucose 6-phosphate to 1D-myo-inositol 3-phosphate in a NAD-dependent manner. The protein is Inositol-3-phosphate synthase (ino1) of Mycobacterium tuberculosis (strain CDC 1551 / Oshkosh).